Here is a 144-residue protein sequence, read N- to C-terminus: Protein CT_635 (144 aa).

The segment at 110–144 (EVTNDIGHSSHKSPTPKKTKSSSQKKSKKKNWIPL) is disordered. The segment covering 118–144 (SSHKSPTPKKTKSSSQKKSKKKNWIPL) has biased composition (basic residues).

The protein belongs to the chlamydial CPn_0742/CT_635/TC_0003 family.

In Chlamydia trachomatis serovar D (strain ATCC VR-885 / DSM 19411 / UW-3/Cx), this protein is Protein CT_635.